The sequence spans 250 residues: Small ribosomal subunit protein uS3 (250 aa).

The KH type-2 domain occupies 39 to 111; sequence IRTLIKNHYP…KVQINIFEVK (73 aa).

It belongs to the universal ribosomal protein uS3 family. Part of the 30S ribosomal subunit. Forms a tight complex with proteins S10 and S14.

Functionally, binds the lower part of the 30S subunit head. Binds mRNA in the 70S ribosome, positioning it for translation. The sequence is that of Small ribosomal subunit protein uS3 from Rubus stunt phytoplasma.